Here is a 348-residue protein sequence, read N- to C-terminus: Alcohol dehydrogenase 1 (348 aa).

C44, H67, C98, C101, C104, C112, and C154 together coordinate Zn(2+). NAD(+) contacts are provided by residues 178–184 (GAGGGLG), D202, K207, 269–271 (VGL), and R341.

It belongs to the zinc-containing alcohol dehydrogenase family. Homotetramer. Requires Zn(2+) as cofactor.

Its subcellular location is the cytoplasm. The catalysed reaction is a primary alcohol + NAD(+) = an aldehyde + NADH + H(+). The enzyme catalyses a secondary alcohol + NAD(+) = a ketone + NADH + H(+). In terms of biological role, converts ethanol to acetaldehyde and plays a major role in xylose fermentation. The chain is Alcohol dehydrogenase 1 (ADH1) from Scheffersomyces stipitis (strain ATCC 58785 / CBS 6054 / NBRC 10063 / NRRL Y-11545) (Yeast).